Consider the following 141-residue polypeptide: Large ribosomal subunit protein uL11 (141 aa).

The protein belongs to the universal ribosomal protein uL11 family. In terms of assembly, part of the ribosomal stalk of the 50S ribosomal subunit. Interacts with L10 and the large rRNA to form the base of the stalk. L10 forms an elongated spine to which L12 dimers bind in a sequential fashion forming a multimeric L10(L12)X complex. One or more lysine residues are methylated.

In terms of biological role, forms part of the ribosomal stalk which helps the ribosome interact with GTP-bound translation factors. In Gloeothece citriformis (strain PCC 7424) (Cyanothece sp. (strain PCC 7424)), this protein is Large ribosomal subunit protein uL11.